A 180-amino-acid chain; its full sequence is ATP-dependent protease subunit HslV (180 aa).

Thr-7 is a catalytic residue. 3 residues coordinate Na(+): Gly-163, Cys-166, and Thr-169.

Belongs to the peptidase T1B family. HslV subfamily. In terms of assembly, a double ring-shaped homohexamer of HslV is capped on each side by a ring-shaped HslU homohexamer. The assembly of the HslU/HslV complex is dependent on binding of ATP.

The protein resides in the cytoplasm. The enzyme catalyses ATP-dependent cleavage of peptide bonds with broad specificity.. With respect to regulation, allosterically activated by HslU binding. Its function is as follows. Protease subunit of a proteasome-like degradation complex believed to be a general protein degrading machinery. This Alcanivorax borkumensis (strain ATCC 700651 / DSM 11573 / NCIMB 13689 / SK2) protein is ATP-dependent protease subunit HslV.